Reading from the N-terminus, the 156-residue chain is RNA pyrophosphohydrolase (156 aa).

In terms of domain architecture, Nudix hydrolase spans 6 to 148 (NYRPNVAAIV…KKNIYVKVIK (143 aa)). The short motif at 43-64 (GGIDKGESVKNALFRELKEEIG) is the Nudix box element.

The protein belongs to the Nudix hydrolase family. RppH subfamily. A divalent metal cation is required as a cofactor.

Accelerates the degradation of transcripts by removing pyrophosphate from the 5'-end of triphosphorylated RNA, leading to a more labile monophosphorylated state that can stimulate subsequent ribonuclease cleavage. In Campylobacter jejuni subsp. jejuni serotype O:6 (strain 81116 / NCTC 11828), this protein is RNA pyrophosphohydrolase.